Reading from the N-terminus, the 415-residue chain is MQFLPKADPEIFAALKKEDERQENNLEMIASENFVSRAVLEAYTSTLTNKYAEGYPGKRYYNGCHNADIVESLAIERAKELFGAEYANVQPHSGAQANMAVFLACLEPGDSFLGMNLAHGGHLTHGSPVNVSGRIYKPIPYGVDSKTETIDYDEIAKLAREHKPKLIVAGASAYARTIDFSKFAEIAKEVGAKLMADIAHISGLVSTGYHPSPVGLFDFVTTTTHKTLRGPRGGLILSTLENEKVLNSRVFPGIQGGPLMHVIAAKAVAFKEALQPEYKKYIEIVLANAKTLAEVFLKRGYRVVSGGTDNHLVLLDVSVKGLTGVQAADGLDEVGVTVNKNAIPFDKNPPAVASGIRLGTPALTTRGLKPADMETVGNLICDFLDNPNEEKNKKRVKGGVQEITRKFPMDQFRLD.

(6S)-5,6,7,8-tetrahydrofolate contacts are provided by residues Leu117 and 121 to 123 (GHL). Lys226 is modified (N6-(pyridoxal phosphate)lysine).

The protein belongs to the SHMT family. As to quaternary structure, homodimer. It depends on pyridoxal 5'-phosphate as a cofactor.

The protein localises to the cytoplasm. It catalyses the reaction (6R)-5,10-methylene-5,6,7,8-tetrahydrofolate + glycine + H2O = (6S)-5,6,7,8-tetrahydrofolate + L-serine. It functions in the pathway one-carbon metabolism; tetrahydrofolate interconversion. It participates in amino-acid biosynthesis; glycine biosynthesis; glycine from L-serine: step 1/1. Its function is as follows. Catalyzes the reversible interconversion of serine and glycine with tetrahydrofolate (THF) serving as the one-carbon carrier. This reaction serves as the major source of one-carbon groups required for the biosynthesis of purines, thymidylate, methionine, and other important biomolecules. Also exhibits THF-independent aldolase activity toward beta-hydroxyamino acids, producing glycine and aldehydes, via a retro-aldol mechanism. In Leptospira borgpetersenii serovar Hardjo-bovis (strain JB197), this protein is Serine hydroxymethyltransferase.